The primary structure comprises 834 residues: Striatin-interacting protein 2 (834 aa).

The interval 1–48 (MEDPAAPGTGGPPANGNGNGGGKGKQAAPKGREAFRSQRRESEGSVDC) is disordered. Residues 8 to 24 (GTGGPPANGNGNGGGKG) are compositionally biased toward gly residues. Basic and acidic residues predominate over residues 30–43 (KGREAFRSQRRESE). 3 positions are modified to phosphoserine: serine 318, serine 329, and serine 354. Positions 321-345 (SYTLDLGESQLAPPPSKLRGRRGSR) are disordered. The tract at residues 360-382 (ERDLFKTEEPATEEEEESAGDGE) is disordered. Residues 369–379 (PATEEEEESAG) show a composition bias toward acidic residues.

The protein belongs to the STRIP family. As to quaternary structure, part of the core of STRIPAK complexes composed of PP2A catalytic and scaffolding subunits, the striatins (PP2A regulatory subunits), the striatin-associated proteins MOB4, STRIP1 and STRIP2, PDCD10 and members of the STE20 kinases, such as STK24 and STK26. Interacts with CTTNBP2NL.

The protein localises to the cytoplasm. Plays a role in the regulation of cell morphology and cytoskeletal organization. Required in the control of cell shape. Calmodulin-binding scaffolding protein which is the center of the striatin-interacting phosphatase and kinase (STRIPAK) complexes. STRIPAK complexes have critical roles in protein (de)phosphorylation and are regulators of multiple signaling pathways including Hippo, MAPK, nuclear receptor and cytoskeleton remodeling. Different types of STRIPAK complexes are involved in a variety of biological processes such as cell growth, differentiation, apoptosis, metabolism and immune regulation. The sequence is that of Striatin-interacting protein 2 from Homo sapiens (Human).